A 419-amino-acid polypeptide reads, in one-letter code: Serine/threonine-protein kinase Kist (419 aa).

The 281-residue stretch at tryptophan 23–phenylalanine 303 folds into the Protein kinase domain. Residues leucine 29–valine 37 and lysine 54 contribute to the ATP site. Residue aspartate 158 is the Proton acceptor of the active site. Positions leucine 323–proline 405 constitute an RRM domain.

The protein belongs to the protein kinase superfamily. Ser/Thr protein kinase family. Interacts with PAM and CDKN1B/p27Kip1. Interacts with stathmin.

It is found in the nucleus. It catalyses the reaction L-seryl-[protein] + ATP = O-phospho-L-seryl-[protein] + ADP + H(+). It carries out the reaction L-threonyl-[protein] + ATP = O-phospho-L-threonyl-[protein] + ADP + H(+). In terms of biological role, upon serum stimulation, phosphorylates CDKN1B/p27Kip1, thus controlling CDKN1B subcellular location and cell cycle progression in G1 phase. May be involved in trafficking and/or processing of RNA. This chain is Serine/threonine-protein kinase Kist (Uhmk1), found in Mus musculus (Mouse).